Reading from the N-terminus, the 294-residue chain is Aspartate carbamoyltransferase catalytic subunit (294 aa).

Carbamoyl phosphate contacts are provided by Arg-49 and Thr-50. Lys-77 serves as a coordination point for L-aspartate. Carbamoyl phosphate-binding residues include Arg-99, His-127, and Gln-130. Residues Arg-161 and Arg-211 each contribute to the L-aspartate site. Residues Gly-250 and Pro-251 each contribute to the carbamoyl phosphate site.

The protein belongs to the aspartate/ornithine carbamoyltransferase superfamily. ATCase family. In terms of assembly, heterododecamer (2C3:3R2) of six catalytic PyrB chains organized as two trimers (C3), and six regulatory PyrI chains organized as three dimers (R2).

The catalysed reaction is carbamoyl phosphate + L-aspartate = N-carbamoyl-L-aspartate + phosphate + H(+). It functions in the pathway pyrimidine metabolism; UMP biosynthesis via de novo pathway; (S)-dihydroorotate from bicarbonate: step 2/3. Its function is as follows. Catalyzes the condensation of carbamoyl phosphate and aspartate to form carbamoyl aspartate and inorganic phosphate, the committed step in the de novo pyrimidine nucleotide biosynthesis pathway. This Sulfurovum sp. (strain NBC37-1) protein is Aspartate carbamoyltransferase catalytic subunit.